The sequence spans 248 residues: MYPSPVRHPGLNLNPQNYVPGPPQYSDFASYHHVPGINNDPHHGQPAAAWGSPYTPAKEDWHSYGTAAASAATNPGQFGFSPPDFNPMQPHAGSGLLPPAISSSVPQLSPNAQRRTPYEWMRRSIPSTSSSGKTRTKDKYRVVYTDHQRLELEKEFHYSRYITIRRKAELAAALGLTERQVKIWFQNRRAKERKVNKKKLQQQSQPTSTTTPTPPAVGTPGPMGTLCSGSAPSLVSSSPLTIKEEFMP.

Positions 137–196 (KDKYRVVYTDHQRLELEKEFHYSRYITIRRKAELAAALGLTERQVKIWFQNRRAKERKVN) form a DNA-binding region, homeobox. The segment at 192-248 (ERKVNKKKLQQQSQPTSTTTPTPPAVGTPGPMGTLCSGSAPSLVSSSPLTIKEEFMP) is disordered. Composition is skewed to low complexity over residues 201–211 (QQQSQPTSTTT) and 228–240 (SGSA…SSPL).

It belongs to the Caudal homeobox family.

It localises to the nucleus. Functionally, may play an important role during the early steps of organogenesis. The polypeptide is Homeobox protein CHOX-CAD (CHOX-CAD1) (Gallus gallus (Chicken)).